A 138-amino-acid chain; its full sequence is Large ribosomal subunit protein bL17 (138 aa).

It belongs to the bacterial ribosomal protein bL17 family. In terms of assembly, part of the 50S ribosomal subunit. Contacts protein L32.

The chain is Large ribosomal subunit protein bL17 from Granulibacter bethesdensis (strain ATCC BAA-1260 / CGDNIH1).